We begin with the raw amino-acid sequence, 965 residues long: Translation initiation factor IF-2 (965 aa).

The tract at residues 94-375 is disordered; the sequence is RTFVRRDEAA…RGKHQESTTF (282 aa). Residues 104–115 are compositionally biased toward low complexity; that stretch reads EQAAEATGNGQE. Basic and acidic residues predominate over residues 121–177; sequence ELQRREEEARHEAELLEKQAQELKARQEQLAREEAERQAREQAAEAERRRAEEEAAK. Residues 181 to 191 are compositionally biased toward low complexity; sequence AAVAEAAAAAR. Residues 192 to 253 show a composition bias toward basic and acidic residues; it reads EQAEQERASQ…KAEAEARAIR (62 aa). Pro residues predominate over residues 267–276; the sequence is PEPPPKPAEA. Low complexity predominate over residues 303-320; it reads KKPAPAAAAQPAATTQPA. Gly residues predominate over residues 351–364; the sequence is TSGGVDRGWRGGPK. In terms of domain architecture, tr-type G spans 465 to 634; the sequence is PRPPVVTVMG…LLQAEVLELK (170 aa). The tract at residues 474 to 481 is G1; the sequence is GHVDHGKT. 474–481 contributes to the GTP binding site; sequence GHVDHGKT. Residues 499–503 are G2; the sequence is GITQH. The segment at 520–523 is G3; sequence DTPG. GTP-binding positions include 520–524 and 574–577; these read DTPGH and NKID. The interval 574–577 is G4; it reads NKID. The interval 610 to 612 is G5; it reads SAK.

It belongs to the TRAFAC class translation factor GTPase superfamily. Classic translation factor GTPase family. IF-2 subfamily.

The protein resides in the cytoplasm. Its function is as follows. One of the essential components for the initiation of protein synthesis. Protects formylmethionyl-tRNA from spontaneous hydrolysis and promotes its binding to the 30S ribosomal subunits. Also involved in the hydrolysis of GTP during the formation of the 70S ribosomal complex. This chain is Translation initiation factor IF-2, found in Paraburkholderia phymatum (strain DSM 17167 / CIP 108236 / LMG 21445 / STM815) (Burkholderia phymatum).